The sequence spans 691 residues: Elongation factor G (691 aa).

The 275-residue stretch at 8-282 (ERVRNIGIAA…AVIDYLPAPV (275 aa)) folds into the tr-type G domain. GTP contacts are provided by residues 17 to 24 (AHIDAGKT), 81 to 85 (DTPGH), and 135 to 138 (NKMD).

Belongs to the TRAFAC class translation factor GTPase superfamily. Classic translation factor GTPase family. EF-G/EF-2 subfamily.

The protein resides in the cytoplasm. Functionally, catalyzes the GTP-dependent ribosomal translocation step during translation elongation. During this step, the ribosome changes from the pre-translocational (PRE) to the post-translocational (POST) state as the newly formed A-site-bound peptidyl-tRNA and P-site-bound deacylated tRNA move to the P and E sites, respectively. Catalyzes the coordinated movement of the two tRNA molecules, the mRNA and conformational changes in the ribosome. This is Elongation factor G from Synechococcus sp. (strain CC9605).